A 1040-amino-acid chain; its full sequence is Activated CDC42 kinase 1 (1040 aa).

The SAM-like domain stretch occupies residues 1–110 (MQPEEGTGWL…PSPTPGGLAG (110 aa)). The disordered stretch occupies residues 86–109 (EAEFPSHHSQSTFRKPSPTPGGLA). T113 carries the phosphothreonine modification. The Protein kinase domain maps to 126 to 385 (LRLLEKLGDG…PTFVALRDFL (260 aa)). ATP contacts are provided by residues 132–140 (LGDGSFGVV) and K158. D252 serves as the catalytic Proton acceptor. The residue at position 284 (Y284) is a Phosphotyrosine; by SRC and autocatalysis. The 61-residue stretch at 388 to 448 (AQPTDMRALQ…PRNVVTSVAG (61 aa)) folds into the SH3 domain. The disordered stretch occupies residues 505–527 (RPTQHLGRMKKPTYDPVSEDPDP). Phosphotyrosine is present on Y518. Residues 623–652 (DWDARPLPPPPAYDDVAQDEDDFEVCSINS) form a required for interaction with SRC region. The interval 632–635 (PPAY) is required for interaction with NEDD4. Residues 722–824 (TGQLTPSPTP…MPTTQSFASD (103 aa)) form a disordered region. Positions 733–876 (GDDKPQVPPR…PYLERYQRFL (144 aa)) are EBD domain. Pro residues-rich tracts occupy residues 738–749 (QVPPRVPIPPRP) and 772–783 (PSSPPRVPPREP). Over residues 802 to 812 (PLPHRLSSSPG) the composition is skewed to low complexity. Phosphotyrosine is present on Y827. R839 is subject to Omega-N-methylarginine. Residues Y859 and Y872 each carry the phosphotyrosine modification. S881 carries the post-translational modification Phosphoserine. The tract at residues 881 to 957 (SPEEPAALPV…CPGDGQEAAR (77 aa)) is disordered. A compositionally biased stretch (pro residues) spans 888–903 (LPVPPLLPPPSTPAPA). Polar residues predominate over residues 922–931 (NFSTNNSNPG). Residues 958-998 (PADKVQMLQAMVHGVTTEECQAALRSHSWSIQRAAQYLKVE) form the UBA domain.

It belongs to the protein kinase superfamily. Tyr protein kinase family. In terms of assembly, homodimer. Interacts with CDC42. Interacts with CSPG4 (activated). Interacts with MERTK (activated); stimulates autophosphorylation. May interact (phosphorylated) with HSP90AB1; maintains kinase activity. Interacts with NPHP1. Interacts with SNX9 (via SH3 domain). Interacts with SRC (via SH2 and SH3 domain). Interacts with EGFR, and this interaction is dependent on EGF stimulation and kinase activity of EGFR. Interacts (via kinase domain) with AKT1. Part of a collagen stimulated complex involved in cell migration composed of CDC42, CRK, TNK2 and BCAR1/p130cas. Interacts with BCAR1/p130cas via SH3 domains. Forms complexes with GRB2 and numerous receptor tyrosine kinases (RTK) including LTK, AXL or PDGFRL, in which GRB2 promotes RTK recruitment by TNK2. Interacts with NEDD4 (via WW3 domain). NEDD4L and EGF promote association with NEDD4. Mg(2+) is required as a cofactor. Post-translationally, autophosphorylation regulates kinase activity. Phosphorylation on Tyr-518 is required for interaction with SRC and is observed during association with clathrin-coated pits. Polyubiquitinated by NEDD4 and NEDD4L. Degradation can be induced by EGF and is lysosome-dependent.

It is found in the cell membrane. It localises to the nucleus. The protein localises to the endosome. Its subcellular location is the cell junction. The protein resides in the adherens junction. It is found in the cytoplasmic vesicle membrane. It localises to the cytoplasmic vesicle. The protein localises to the clathrin-coated vesicle. Its subcellular location is the membrane. The protein resides in the clathrin-coated pit. It is found in the cytoplasm. It localises to the cytosol. It catalyses the reaction L-tyrosyl-[protein] + ATP = O-phospho-L-tyrosyl-[protein] + ADP + H(+). The enzyme catalyses L-seryl-[protein] + ATP = O-phospho-L-seryl-[protein] + ADP + H(+). It carries out the reaction L-threonyl-[protein] + ATP = O-phospho-L-threonyl-[protein] + ADP + H(+). In terms of biological role, non-receptor tyrosine-protein and serine/threonine-protein kinase that is implicated in cell spreading and migration, cell survival, cell growth and proliferation. Transduces extracellular signals to cytosolic and nuclear effectors. Phosphorylates AKT1, AR, MCF2, WASL and WWOX. Implicated in trafficking and clathrin-mediated endocytosis through binding to epidermal growth factor receptor (EGFR) and clathrin. Binds to both poly- and mono-ubiquitin and regulates ligand-induced degradation of EGFR, thereby contributing to the accumulation of EGFR at the limiting membrane of early endosomes. Downstream effector of CDC42 which mediates CDC42-dependent cell migration via phosphorylation of BCAR1. May be involved both in adult synaptic function and plasticity and in brain development. Activates AKT1 by phosphorylating it on 'Tyr-176'. Phosphorylates AR on 'Tyr-267' and 'Tyr-363', thereby promoting its recruitment to androgen-responsive enhancers (AREs). Phosphorylates WWOX on 'Tyr-287'. Phosphorylates MCF2, thereby enhancing its activity as a guanine nucleotide exchange factor (GEF) toward Rho family proteins. Contributes to the control of AXL receptor levels. Confers metastatic properties on cancer cells and promotes tumor growth by negatively regulating tumor suppressor such as WWOX and positively regulating pro-survival factors such as AKT1 and AR. The polypeptide is Activated CDC42 kinase 1 (Rattus norvegicus (Rat)).